Here is a 214-residue protein sequence, read N- to C-terminus: Adenylate kinase (214 aa).

14 to 19 lines the ATP pocket; sequence GSGKGT. The NMP stretch occupies residues 34–63; the sequence is SSGDLFRSAIKSATPLGSKAAEYINKGLLV. Residues Ser35, Arg40, 61-63, 89-92, and Gln96 contribute to the AMP site; these read LLV and GFPR. An LID region spans residues 130–163; sequence SRFICPACNYVYNQSQGFKECPTCHVALIRRSDD. Arg131 provides a ligand contact to ATP. Residues Cys134 and Cys137 each contribute to the Zn(2+) site. 140–141 lines the ATP pocket; sequence VY. Cys150 and Cys153 together coordinate Zn(2+). 2 residues coordinate AMP: Arg160 and Arg171. Thr199 contributes to the ATP binding site.

Belongs to the adenylate kinase family. As to quaternary structure, monomer.

It is found in the cytoplasm. It catalyses the reaction AMP + ATP = 2 ADP. Its pathway is purine metabolism; AMP biosynthesis via salvage pathway; AMP from ADP: step 1/1. Catalyzes the reversible transfer of the terminal phosphate group between ATP and AMP. Plays an important role in cellular energy homeostasis and in adenine nucleotide metabolism. The protein is Adenylate kinase of Chlamydia caviae (strain ATCC VR-813 / DSM 19441 / 03DC25 / GPIC) (Chlamydophila caviae).